The following is a 370-amino-acid chain: Vasopressin V2 receptor (370 aa).

The segment covering methionine 1 to glycine 21 has biased composition (polar residues). The interval methionine 1–glycine 26 is disordered. Over methionine 1–glutamine 38 the chain is Extracellular. The N-linked (GlcNAc...) asparagine glycan is linked to asparagine 22. Residues alanine 39 to valine 63 traverse the membrane as a helical segment. Over arginine 64–phenylalanine 77 the chain is Cytoplasmic. The helical transmembrane segment at isoleucine 78–alanine 98 threads the bilayer. Residues tryptophan 99–arginine 113 are Extracellular-facing. A helical membrane pass occupies residues alanine 114–leucine 135. Residues aspartate 136 to proline 159 lie on the Cytoplasmic side of the membrane. The helical transmembrane segment at valine 160 to glutamine 180 threads the bilayer. Residues arginine 181–tryptophan 199 lie on the Extracellular side of the membrane. Residues glycine 200 to glycine 219 traverse the membrane as a helical segment. The Cytoplasmic portion of the chain corresponds to isoleucine 220–lysine 270. The chain crosses the membrane as a helical span at residues methionine 271 to tryptophan 292. Over alanine 293–valine 307 the chain is Extracellular. Residues leucine 308–phenylalanine 327 form a helical membrane-spanning segment. The Cytoplasmic segment spans residues serine 328 to serine 370. 2 S-palmitoyl cysteine lipidation sites follow: cysteine 340 and cysteine 341. Residues proline 347–serine 370 are disordered.

It belongs to the G-protein coupled receptor 1 family. Vasopressin/oxytocin receptor subfamily. As to quaternary structure, interacts with ARRDC4. Identified in a complex containing at least ARRDC4, V2R and HGS. Interacts with TMEM147.

The protein localises to the cell membrane. In terms of biological role, receptor for arginine vasopressin. The activity of this receptor is mediated by G proteins which activate adenylate cyclase. Involved in renal water reabsorption. This is Vasopressin V2 receptor (AVPR2) from Bos taurus (Bovine).